The chain runs to 274 residues: N-acetylmuramic acid 6-phosphate etherase (274 aa).

The 164-residue stretch at 52–215 (IIPRMEQGGR…STSIMIRLGR (164 aa)) folds into the SIS domain. The active-site Proton donor is E80. Residue E111 is part of the active site.

This sequence belongs to the GCKR-like family. MurNAc-6-P etherase subfamily. Homodimer.

The catalysed reaction is N-acetyl-D-muramate 6-phosphate + H2O = N-acetyl-D-glucosamine 6-phosphate + (R)-lactate. It functions in the pathway amino-sugar metabolism; N-acetylmuramate degradation. Specifically catalyzes the cleavage of the D-lactyl ether substituent of MurNAc 6-phosphate, producing GlcNAc 6-phosphate and D-lactate. The polypeptide is N-acetylmuramic acid 6-phosphate etherase (Porphyromonas gingivalis (strain ATCC BAA-308 / W83)).